A 285-amino-acid polypeptide reads, in one-letter code: Nucleotide-binding protein FMG_1084 (285 aa).

Position 8 to 15 (8 to 15) interacts with ATP; it reads GMSGAGKS. 59–62 is a binding site for GTP; that stretch reads DIRG.

Belongs to the RapZ-like family.

In terms of biological role, displays ATPase and GTPase activities. This chain is Nucleotide-binding protein FMG_1084, found in Finegoldia magna (strain ATCC 29328 / DSM 20472 / WAL 2508) (Peptostreptococcus magnus).